The chain runs to 472 residues: Doublesex- and mab-3-related transcription factor 3 (472 aa).

The DM DNA-binding region spans 29-76 (CARCRNHGVLSWLKGHKRYCRFKDCTCEKCILIIERQRVMAAQVALRR). 2 disordered regions span residues 89–128 (DSLR…AELA) and 155–191 (EERL…GCFT). The span at 95–123 (PGPPPPGDAVAAPQPPPASQPSQPQPPRP) shows a compositional bias: pro residues. Basic and acidic residues predominate over residues 155–179 (EERLGDGKSADNTEVFSDKDTDQRS). One can recognise a DMA domain in the interval 249-284 (RPPLEVLKKIFPNQKPTVLELILKGCGGDLVSAVEV). Residues 430–472 (TEDPRISIPDDGCPFVSKQSIYTEDDYDERSDSSDSRTLNTSS) form a disordered region.

The protein belongs to the DMRT family. In terms of assembly, may homodimerize. As to expression, expressed in testis.

It localises to the nucleus. Probable transcription factor that plays a role in configuring the spinal circuits controlling stride in vertebrates. Involved in neuronal specification within specific subdivision of spinal cord neurons and in the development of a coordinated locomotor network controlling limb movements. May regulate transcription during sexual development. This chain is Doublesex- and mab-3-related transcription factor 3 (DMRT3), found in Homo sapiens (Human).